The primary structure comprises 515 residues: 2-isopropylmalate synthase (515 aa).

Residues 5 to 267 (VIIFDTTLRD…DTRINTQEIH (263 aa)) form the Pyruvate carboxyltransferase domain. Residues Asp-14, His-202, His-204, and Asn-238 each coordinate Mn(2+). Residues 392–515 (VLDKLSAHST…VADIKNHKHH (124 aa)) form a regulatory domain region.

This sequence belongs to the alpha-IPM synthase/homocitrate synthase family. LeuA type 1 subfamily. Homodimer. Mn(2+) is required as a cofactor.

Its subcellular location is the cytoplasm. The enzyme catalyses 3-methyl-2-oxobutanoate + acetyl-CoA + H2O = (2S)-2-isopropylmalate + CoA + H(+). Its pathway is amino-acid biosynthesis; L-leucine biosynthesis; L-leucine from 3-methyl-2-oxobutanoate: step 1/4. Its function is as follows. Catalyzes the condensation of the acetyl group of acetyl-CoA with 3-methyl-2-oxobutanoate (2-ketoisovalerate) to form 3-carboxy-3-hydroxy-4-methylpentanoate (2-isopropylmalate). In Haemophilus influenzae (strain PittEE), this protein is 2-isopropylmalate synthase.